Consider the following 669-residue polypeptide: Putative heme-binding protein rrnAC3100 (669 aa).

Position 181 (His-181) interacts with heme. Disordered stretches follow at residues 260-351 and 451-477; these read RVPT…PDVS and LGGS…ESSQ. The region spanning 579–667 is the ABM domain; sequence GTMGMFYTVK…VLADRPRHVF (89 aa).

The protein in the N-terminal section; belongs to the ChdC family.

This chain is Putative heme-binding protein rrnAC3100, found in Haloarcula marismortui (strain ATCC 43049 / DSM 3752 / JCM 8966 / VKM B-1809) (Halobacterium marismortui).